Reading from the N-terminus, the 139-residue chain is Mediator of RNA polymerase II transcription subunit 21 (139 aa).

The disordered stretch occupies residues Asp-28 to Pro-58. A compositionally biased stretch (low complexity) spans Ala-43–Phe-54. Positions Arg-92–Cys-132 form a coiled coil.

The protein belongs to the Mediator complex subunit 21 family. As to quaternary structure, component of the Mediator complex. Interacts with HUB1.

Its subcellular location is the nucleus. Its function is as follows. Component of the Mediator complex, a coactivator involved in the regulated transcription of nearly all RNA polymerase II-dependent genes. Mediator functions as a bridge to convey information from gene-specific regulatory proteins to the basal RNA polymerase II transcription machinery. Mediator is recruited to promoters by direct interactions with regulatory proteins and serves as a scaffold for the assembly of a functional preinitiation complex with RNA polymerase II and the general transcription factors. Required for embryo development and defense against necrotrophic fungal pathogens. The sequence is that of Mediator of RNA polymerase II transcription subunit 21 (MED21) from Arabidopsis thaliana (Mouse-ear cress).